We begin with the raw amino-acid sequence, 398 residues long: Acetate kinase (398 aa).

N10 contributes to the Mg(2+) binding site. K17 is an ATP binding site. R91 contributes to the substrate binding site. Residue D148 is the Proton donor/acceptor of the active site. Residues 208-212 (HLGNG), 283-285 (DCR), and 331-335 (GIGEN) each bind ATP. Residue E385 coordinates Mg(2+).

It belongs to the acetokinase family. In terms of assembly, homodimer. The cofactor is Mg(2+). Mn(2+) is required as a cofactor.

It is found in the cytoplasm. It carries out the reaction acetate + ATP = acetyl phosphate + ADP. The protein operates within metabolic intermediate biosynthesis; acetyl-CoA biosynthesis; acetyl-CoA from acetate: step 1/2. Catalyzes the formation of acetyl phosphate from acetate and ATP. Can also catalyze the reverse reaction. In Shewanella pealeana (strain ATCC 700345 / ANG-SQ1), this protein is Acetate kinase.